The chain runs to 392 residues: Elongation factor Tu (392 aa).

The region spanning 10–202 (KVHVNVGTIG…VLDEYIEDPI (193 aa)) is the tr-type G domain. The G1 stretch occupies residues 19 to 26 (GHVDHGKT). A GTP-binding site is contributed by 19–26 (GHVDHGKT). Threonine 26 contacts Mg(2+). A G2 region spans residues 60-64 (GITIN). Residues 81–84 (DCPG) are G3. GTP is bound by residues 81–85 (DCPGH) and 136–139 (NKCD). The G4 stretch occupies residues 136 to 139 (NKCD). The tract at residues 174-176 (SAL) is G5.

The protein belongs to the TRAFAC class translation factor GTPase superfamily. Classic translation factor GTPase family. EF-Tu/EF-1A subfamily. In terms of assembly, monomer.

It localises to the cytoplasm. It carries out the reaction GTP + H2O = GDP + phosphate + H(+). Functionally, GTP hydrolase that promotes the GTP-dependent binding of aminoacyl-tRNA to the A-site of ribosomes during protein biosynthesis. In Phytoplasma mali (strain AT), this protein is Elongation factor Tu.